The following is a 77-amino-acid chain: uncharacterized protein (77 aa).

The protein to E.coli YdfK.

This is an uncharacterized protein from Escherichia coli (strain K12).